Here is a 282-residue protein sequence, read N- to C-terminus: tRNA (guanine-N(7)-)-methyltransferase (282 aa).

A disordered region spans residues 1-31 (MSLTDDQASKRQAYRAAKEANRKELKHVKID). Over residues 16–31 (AAKEANRKELKHVKID) the composition is skewed to basic and acidic residues. S-adenosyl-L-methionine is bound by residues Gly99, 122–123 (EI), 157–158 (NA), and Cys177. Asp180 is an active-site residue. An S-adenosyl-L-methionine-binding site is contributed by 255–257 (TEE).

The protein belongs to the class I-like SAM-binding methyltransferase superfamily. TrmB family. Forms a complex with TRM82.

The protein resides in the nucleus. The catalysed reaction is guanosine(46) in tRNA + S-adenosyl-L-methionine = N(7)-methylguanosine(46) in tRNA + S-adenosyl-L-homocysteine. It participates in tRNA modification; N(7)-methylguanine-tRNA biosynthesis. Catalyzes the formation of N(7)-methylguanine at position 46 (m7G46) in tRNA. This Eremothecium gossypii (strain ATCC 10895 / CBS 109.51 / FGSC 9923 / NRRL Y-1056) (Yeast) protein is tRNA (guanine-N(7)-)-methyltransferase.